The sequence spans 515 residues: Cytidine and dCMP deaminase domain-containing protein 1 (515 aa).

Polar residues-rich tracts occupy residues 1–11 and 18–27; these read MKEAGQMQNLE and SVSTQTGSMT. 2 disordered regions span residues 1 to 27 and 56 to 83; these read MKEA…GSMT and RQKS…STDK. The segment covering 60 to 83 has biased composition (basic and acidic residues); sequence QKNEEGKHGPLGDNEEMTRVSTDK. Residues 71–169 form the CMP/dCMP-type deaminase 1 domain; it reads GDNEEMTRVS…SLLTEASSSE (99 aa). His110, Cys135, and Cys138 together coordinate Zn(2+). Positions 272-284 match the Nuclear export signal motif; sequence NLRQNMKDLILLL. One can recognise a CMP/dCMP-type deaminase 2 domain in the interval 318 to 483; sequence EIARHCMVQA…LNPSGAYGLE (166 aa). His399 serves as a coordination point for Zn(2+). Residue Glu401 is the Proton donor of the active site. 2 residues coordinate Zn(2+): Cys427 and Cys430. Positions 489–511 match the Bipartite nuclear localization signal motif; sequence RRENGVLRPVPQKEEQHQDKKLC. The tract at residues 494–515 is disordered; it reads VLRPVPQKEEQHQDKKLCLGIH.

This sequence belongs to the cytidine and deoxycytidylate deaminase family. The cofactor is Zn(2+).

The protein resides in the cytoplasm. It localises to the nucleus. The catalysed reaction is 2'-deoxycytidine + H2O + H(+) = 2'-deoxyuridine + NH4(+). The enzyme catalyses cytidine + H2O + H(+) = uridine + NH4(+). In terms of biological role, catalyzes the deamination of cytidine and deoxycytidine into uridine and deoxyuridine, respectively. May play an important role in testicular development and spermatogenesis. The chain is Cytidine and dCMP deaminase domain-containing protein 1 (CDADC1) from Pongo abelii (Sumatran orangutan).